The sequence spans 428 residues: Glutamate-1-semialdehyde 2,1-aminomutase (428 aa).

The residue at position 267 (K267) is an N6-(pyridoxal phosphate)lysine.

The protein belongs to the class-III pyridoxal-phosphate-dependent aminotransferase family. HemL subfamily. In terms of assembly, homodimer. Pyridoxal 5'-phosphate serves as cofactor.

It is found in the cytoplasm. The catalysed reaction is (S)-4-amino-5-oxopentanoate = 5-aminolevulinate. It participates in porphyrin-containing compound metabolism; protoporphyrin-IX biosynthesis; 5-aminolevulinate from L-glutamyl-tRNA(Glu): step 2/2. This is Glutamate-1-semialdehyde 2,1-aminomutase from Sulfurihydrogenibium sp. (strain YO3AOP1).